A 308-amino-acid chain; its full sequence is Methionine synthase (308 aa).

Residues histidine 201, cysteine 203, glutamate 224, and cysteine 285 each coordinate Zn(2+).

It belongs to the archaeal MetE family. Zn(2+) is required as a cofactor.

It participates in amino-acid biosynthesis; L-methionine biosynthesis via de novo pathway. Functionally, catalyzes the transfer of a methyl group to L-homocysteine resulting in methionine formation. Can use methylcobalamin and methylcobinamide as methyl donors, but methylcobalamin is not considered to be the physiological substrate. The protein is Methionine synthase of Methanothermobacter thermautotrophicus (strain ATCC 29096 / DSM 1053 / JCM 10044 / NBRC 100330 / Delta H) (Methanobacterium thermoautotrophicum).